The following is a 275-amino-acid chain: 2-dehydro-3-deoxyphosphooctonate aldolase (275 aa).

This sequence belongs to the KdsA family.

The protein localises to the cytoplasm. The enzyme catalyses D-arabinose 5-phosphate + phosphoenolpyruvate + H2O = 3-deoxy-alpha-D-manno-2-octulosonate-8-phosphate + phosphate. It functions in the pathway carbohydrate biosynthesis; 3-deoxy-D-manno-octulosonate biosynthesis; 3-deoxy-D-manno-octulosonate from D-ribulose 5-phosphate: step 2/3. It participates in bacterial outer membrane biogenesis; lipopolysaccharide biosynthesis. This is 2-dehydro-3-deoxyphosphooctonate aldolase from Francisella tularensis subsp. holarctica (strain LVS).